A 331-amino-acid polypeptide reads, in one-letter code: Cytoplasmic envelopment protein 1 (331 aa).

This sequence belongs to the herpesviridae cytoplasmic envelopment protein 1 family. Interacts with protein ORF7; this interaction localizes protein ORF53 to the host trans-Golgi network (TGN).

Its subcellular location is the virion. It localises to the virion tegument. The protein resides in the host cytoplasm. The protein localises to the host Golgi apparatus. Plays a critical role in cytoplasmic virus egress. Participates in the final step of tegumentation and envelope acquisition within the host cytoplasm. The chain is Cytoplasmic envelopment protein 1 (ORF53) from Varicella-zoster virus (strain Dumas) (HHV-3).